The following is a 98-amino-acid chain: Small ribosomal subunit protein bS6 (98 aa).

The protein belongs to the bacterial ribosomal protein bS6 family.

Its function is as follows. Binds together with bS18 to 16S ribosomal RNA. The sequence is that of Small ribosomal subunit protein bS6 from Staphylococcus epidermidis (strain ATCC 35984 / DSM 28319 / BCRC 17069 / CCUG 31568 / BM 3577 / RP62A).